A 471-amino-acid polypeptide reads, in one-letter code: Delta(24(24(1)))-sterol reductase erg4A (471 aa).

Residue Asn-15 is glycosylated (N-linked (GlcNAc...) asparagine). A run of 8 helical transmembrane segments spans residues 33 to 53 (VTLIMIGFPLLMYYMYIGAVL), 89 to 109 (WTIYWTFLILEGAGYLYLPGV), 130 to 150 (AVSSWYLTIAAALILHFTGVL), 159 to 179 (FGPLMSVAICSGIFVSIVAYI), 216 to 236 (MFFEVRIPWFILFLLTLGTAL), 244 to 264 (LVAGEVLFLLMAHFLYANACA), 282 to 302 (GFMLIFWNLAGVPMSYCHCTL), and 313 to 333 (HWNPWVLAVWAVAYLFMYWVW). NADP(+) contacts are provided by residues Lys-340, Arg-344, Leu-380, and 392-393 (HY). The chain crosses the membrane as a helical span at residues 397 to 417 (VFFAISWGLITGFNSPFPWFY). Residues Asp-432, 436 to 440 (CRERY), and Tyr-447 each bind NADP(+).

It belongs to the ERG4/ERG24 family.

The protein resides in the endoplasmic reticulum membrane. The enzyme catalyses ergosterol + NADP(+) = ergosta-5,7,22,24(28)-tetraen-3beta-ol + NADPH + H(+). It participates in steroid metabolism; ergosterol biosynthesis. In terms of biological role, delta(24(24(1)))-sterol reductase; part of the third module of ergosterol biosynthesis pathway that includes the late steps of the pathway. Catalyzes the last step of ergosterol biosynthesis by converting ergosta-5,7,22,24(28)-tetraen-3beta-ol into ergosterol. The third module or late pathway involves the ergosterol synthesis itself through consecutive reactions that mainly occur in the endoplasmic reticulum (ER) membrane. Firstly, the squalene synthase erg9 catalyzes the condensation of 2 farnesyl pyrophosphate moieties to form squalene, which is the precursor of all steroids. Squalene synthase is crucial for balancing the incorporation of farnesyl diphosphate (FPP) into sterol and nonsterol isoprene synthesis. Secondly, squalene is converted into lanosterol by the consecutive action of the squalene epoxidase erg1 and the lanosterol synthase erg7. Then, the delta(24)-sterol C-methyltransferase erg6 methylates lanosterol at C-24 to produce eburicol. Eburicol is the substrate of the sterol 14-alpha demethylase encoded by cyp51A and cyp51B, to yield 4,4,24-trimethyl ergosta-8,14,24(28)-trienol. The C-14 reductase erg24 then reduces the C14=C15 double bond which leads to 4,4-dimethylfecosterol. A sequence of further demethylations at C-4, involving the C-4 demethylation complex containing the C-4 methylsterol oxidases erg25A or erg25B, the sterol-4-alpha-carboxylate 3-dehydrogenase erg26 and the 3-keto-steroid reductase erg27, leads to the production of fecosterol via 4-methylfecosterol. The C-8 sterol isomerase erg2 then catalyzes the reaction which results in unsaturation at C-7 in the B ring of sterols and thus converts fecosterol to episterol. The sterol-C5-desaturase erg3B then catalyzes the introduction of a C-5 double bond in the B ring to produce 5-dehydroepisterol. The 2 other sterol-C5-desaturases, erg3A and erg3C, seem to be less important in ergosterol biosynthesis. The C-22 sterol desaturase erg5 further converts 5-dehydroepisterol into ergosta-5,7,22,24(28)-tetraen-3beta-ol by forming the C-22(23) double bond in the sterol side chain. Finally, ergosta-5,7,22,24(28)-tetraen-3beta-ol is substrate of the C-24(28) sterol reductases erg4A and erg4B to produce ergosterol. Possible alternative sterol biosynthetic pathways might exist from fecosterol to ergosterol, depending on the activities of the erg3 isoforms. This Aspergillus fumigatus (strain ATCC MYA-4609 / CBS 101355 / FGSC A1100 / Af293) (Neosartorya fumigata) protein is Delta(24(24(1)))-sterol reductase erg4A.